Consider the following 364-residue polypeptide: tRNA-specific 2-thiouridylase MnmA (364 aa).

ATP is bound by residues 13–20 and methionine 39; that span reads GMSGGVDS. Residues 99–101 form an interaction with target base in tRNA region; that stretch reads NPD. The Nucleophile role is filled by cysteine 104. A disulfide bridge links cysteine 104 with cysteine 199. Glycine 128 lines the ATP pocket. Residues 149–151 form an interaction with tRNA region; it reads KDQ. The active-site Cysteine persulfide intermediate is cysteine 199. An interaction with tRNA region spans residues 311 to 312; the sequence is RY.

This sequence belongs to the MnmA/TRMU family.

The protein localises to the cytoplasm. It catalyses the reaction S-sulfanyl-L-cysteinyl-[protein] + uridine(34) in tRNA + AH2 + ATP = 2-thiouridine(34) in tRNA + L-cysteinyl-[protein] + A + AMP + diphosphate + H(+). Functionally, catalyzes the 2-thiolation of uridine at the wobble position (U34) of tRNA, leading to the formation of s(2)U34. In Alcanivorax borkumensis (strain ATCC 700651 / DSM 11573 / NCIMB 13689 / SK2), this protein is tRNA-specific 2-thiouridylase MnmA.